Reading from the N-terminus, the 443-residue chain is Zinc finger CCCH domain-containing protein 63 (443 aa).

Disordered stretches follow at residues 1 to 29 and 56 to 99; these read MDFD…MAPT and LPGP…SSSW. 2 consecutive C3H1-type zinc fingers follow at residues 30–56 and 109–136; these read DTRQ…HREL and TKTE…HCWS. 6 WD repeats span residues 149–190, 228–265, 272–311, 313–349, 354–396, and 404–442; these read GHEK…GVLK, GPVG…NCFE, GHTL…QTLT, HSSV…NLEV, KEEH…LFIR, and FAKQ…TAAL.

The protein is Zinc finger CCCH domain-containing protein 63 (ZFWD2) of Arabidopsis thaliana (Mouse-ear cress).